A 598-amino-acid polypeptide reads, in one-letter code: Peroxisomal multifunctional enzyme type 2 (598 aa).

The (3R)-hydroxyacyl-CoA dehydrogenase stretch occupies residues 1 to 309 (MSSSDGKLRY…LEVLEKLKEG (309 aa)). Residues 16-40 (VVTG…AKVV), leucine 24, aspartate 43, 78-79 (SV), and asparagine 102 each bind NAD(+). Serine 154 provides a ligand contact to substrate. Catalysis depends on tyrosine 167, which acts as the Proton acceptor. NAD(+)-binding positions include 167–171 (YTAAK) and 199–202 (AASR). Residues 310–598 (GGDAIEDAFE…VDLKSSQAKL (289 aa)) are enoyl-CoA hydratase 2. Residues 390 to 391 (HG), lysine 419, 496 to 501 (DKNPLH), glycine 519, and phenylalanine 549 each bind (3R)-3-hydroxydecanoyl-CoA. The 118-residue stretch at 469–586 (PAPNRQPDAT…VETGKEVISG (118 aa)) folds into the MaoC-like domain. A Microbody targeting signal motif is present at residues 596–598 (AKL).

It belongs to the short-chain dehydrogenases/reductases (SDR) family. As to quaternary structure, homodimer.

Its subcellular location is the peroxisome. It catalyses the reaction a (3R)-3-hydroxyacyl-CoA + NAD(+) = a 3-oxoacyl-CoA + NADH + H(+). The catalysed reaction is a (3R)-3-hydroxyacyl-CoA = a (2E)-enoyl-CoA + H2O. Its pathway is lipid metabolism; fatty acid beta-oxidation. Its function is as follows. Bifunctional enzyme acting on the peroxisomal beta-oxidation pathway for fatty acids. This chain is Peroxisomal multifunctional enzyme type 2, found in Drosophila melanogaster (Fruit fly).